The primary structure comprises 244 residues: Carboxy-S-adenosyl-L-methionine synthase (244 aa).

S-adenosyl-L-methionine contacts are provided by residues Y41, 66-68, 91-92, 119-120, N134, and R201; these read GCS, DN, and DI.

The protein belongs to the class I-like SAM-binding methyltransferase superfamily. Cx-SAM synthase family. In terms of assembly, homodimer.

The catalysed reaction is prephenate + S-adenosyl-L-methionine = carboxy-S-adenosyl-L-methionine + 3-phenylpyruvate + H2O. Functionally, catalyzes the conversion of S-adenosyl-L-methionine (SAM) to carboxy-S-adenosyl-L-methionine (Cx-SAM). This chain is Carboxy-S-adenosyl-L-methionine synthase, found in Photobacterium profundum (strain SS9).